A 143-amino-acid chain; its full sequence is Snake venom vascular endothelial growth factor toxin (143 aa).

Positions 1–24 are cleaved as a signal peptide; that stretch reads MAAYLLAVAILFCIQGWPSATVQG. Gln-25 is modified (pyrrolidone carboxylic acid). 3 disulfides stabilise this stretch: Cys-38-Cys-80, Cys-69-Cys-115, and Cys-73-Cys-117. A disordered region spans residues 115-143; sequence CECRPRSPGDVNNGRNPEEGEPRARFPFV. A compositionally biased stretch (basic and acidic residues) spans 130 to 143; the sequence is NPEEGEPRARFPFV.

Belongs to the PDGF/VEGF growth factor family. Snake venom VEGF subfamily. In terms of assembly, homodimer; disulfide-linked. Interacts with VEGF receptor-2 (KDR). The N-terminus is blocked for N-terminal sequencing, suggesting a Pyrrolidone carboxylic acid at Gln-25. In terms of tissue distribution, expressed by the venom gland.

Its subcellular location is the secreted. Snake venom VEGFs that may contribute to venom dispersion and prey subjugation by inducing vascular permeability and hypotension. This protein induces an increase in capillary permeability when intradermally injected into mice. Also provokes a drastic hypotensive effect after intravenous injection. The hypotension is mediated by nitric oxide (NO), which is produced by VEGF-activated endothelium NO synthase. Also induces angiogenesis in vitro. Unlike other crotalid VEGFs, this protein interacts with VEGF receptor-2 (KDR) with a high affinity (Kd=413 pM), whereas no interaction is detected with VEGF receptor-1 (FLT1). The polypeptide is Snake venom vascular endothelial growth factor toxin (Protobothrops jerdonii (Jerdon's pitviper)).